The sequence spans 91 residues: MIPRVLILLTLVALFCACSTLAAVAHIEVDCIPPFTVYLLYGFVTLILICSLVTVVIAFIQFIDWICVRIAYLRHHPQYRDRTIADLLRIL.

A signal peptide spans 1–22; the sequence is MIPRVLILLTLVALFCACSTLA. The Lumenal segment spans residues 23-34; it reads AVAHIEVDCIPP. Residues 35–60 form a helical membrane-spanning segment; the sequence is FTVYLLYGFVTLILICSLVTVVIAFI. At 61–91 the chain is on the cytoplasmic side; sequence QFIDWICVRIAYLRHHPQYRDRTIADLLRIL.

This sequence belongs to the adenoviridae E3B family.

Its subcellular location is the host endoplasmic reticulum membrane. Its function is as follows. Down-regulates the EGF receptor. The chain is Early E3B 10.4 kDa protein from Homo sapiens (Human).